The following is a 362-amino-acid chain: Ferrochelatase (362 aa).

Fe cation contacts are provided by histidine 212 and glutamate 294.

It belongs to the ferrochelatase family.

The protein localises to the cytoplasm. It catalyses the reaction heme b + 2 H(+) = protoporphyrin IX + Fe(2+). It participates in porphyrin-containing compound metabolism; protoheme biosynthesis; protoheme from protoporphyrin-IX: step 1/1. Its function is as follows. Catalyzes the ferrous insertion into protoporphyrin IX. In Leptospira biflexa, this protein is Ferrochelatase.